A 407-amino-acid polypeptide reads, in one-letter code: MAAAAAPLADDGDGIVDRDMWLACAAPNSGRLPAVGSVVFYFVDGHAAQFCQFPAPLLEQLAVPGPRVFLCTVAAVRLRADALTNEAYAEITLDPVADHDVPRLAPAPAPAPAAAAGGQQLRYFVKTLMISDFDFRIRFSAPMADAKGVFPPLVDAKAVQPLLVKDLHGSPMTFDYGRKGKRVTLAKVWKKFRDDMDFVDGDSVIFMRRRDDDDDDGELYVGVRRQRTLERPLRNTMRRYRPPTPPQAAVQEAVLAAAGHAAAGERFTVAYRSRKDGDEFVVPREAVEEGLRARLTSLAEVEFVWAVEDGAPPIVGPRGKVTAIATGQLWRNLEIVWDGNSEMDMSANFWQVRPVEEVDISPSTPPPKRLKNCEIDDTASTSVSVDNGDEQVPTMRQRLEALIPDNI.

The TF-B3 DNA-binding region spans 124 to 227 (FVKTLMISDF…ELYVGVRRQR (104 aa)).

It localises to the nucleus. The chain is B3 domain-containing protein Os07g0183200 from Oryza sativa subsp. japonica (Rice).